Consider the following 216-residue polypeptide: Kynurenine formamidase (216 aa).

W24 provides a ligand contact to substrate. Zn(2+)-binding residues include H54, H58, and D60. H64 functions as the Proton donor/acceptor in the catalytic mechanism. Zn(2+) is bound by residues H164 and E176.

Belongs to the Cyclase 1 superfamily. KynB family. Homodimer. Requires Zn(2+) as cofactor.

It catalyses the reaction N-formyl-L-kynurenine + H2O = L-kynurenine + formate + H(+). It participates in amino-acid degradation; L-tryptophan degradation via kynurenine pathway; L-kynurenine from L-tryptophan: step 2/2. Its function is as follows. Catalyzes the hydrolysis of N-formyl-L-kynurenine to L-kynurenine, the second step in the kynurenine pathway of tryptophan degradation. The protein is Kynurenine formamidase of Erythrobacter litoralis (strain HTCC2594).